Consider the following 145-residue polypeptide: Transcriptional regulator MraZ (145 aa).

2 consecutive SpoVT-AbrB domains span residues 5-47 and 76-119; these read EHQH…PLPE and AVEC…AKDQ.

Belongs to the MraZ family. Forms oligomers.

It localises to the cytoplasm. The protein localises to the nucleoid. This Pelotomaculum thermopropionicum (strain DSM 13744 / JCM 10971 / SI) protein is Transcriptional regulator MraZ.